The chain runs to 127 residues: EF-hand calcium-binding domain-containing protein 10 (127 aa).

The 36-residue stretch at Met-63–Cys-98 folds into the EF-hand domain.

The chain is EF-hand calcium-binding domain-containing protein 10 (EFCAB10) from Homo sapiens (Human).